The sequence spans 335 residues: Holliday junction branch migration complex subunit RuvB (335 aa).

Residues 4 to 184 (ADRLVSAEVL…FGIVQRLEFY (181 aa)) are large ATPase domain (RuvB-L). ATP contacts are provided by residues Ile-23, Arg-24, Gly-65, Lys-68, Thr-69, Thr-70, 131-133 (EDY), Arg-174, Tyr-184, and Arg-221. A Mg(2+)-binding site is contributed by Thr-69. The small ATPAse domain (RuvB-S) stretch occupies residues 185 to 255 (NVDDLQSIVS…IATRALDMLS (71 aa)). The head domain (RuvB-H) stretch occupies residues 258 to 335 (AAGFDYLDRK…RHFGMVRNQE (78 aa)). Arg-294, Arg-313, and Arg-318 together coordinate DNA.

The protein belongs to the RuvB family. In terms of assembly, homohexamer. Forms an RuvA(8)-RuvB(12)-Holliday junction (HJ) complex. HJ DNA is sandwiched between 2 RuvA tetramers; dsDNA enters through RuvA and exits via RuvB. An RuvB hexamer assembles on each DNA strand where it exits the tetramer. Each RuvB hexamer is contacted by two RuvA subunits (via domain III) on 2 adjacent RuvB subunits; this complex drives branch migration. In the full resolvosome a probable DNA-RuvA(4)-RuvB(12)-RuvC(2) complex forms which resolves the HJ.

The protein localises to the cytoplasm. It carries out the reaction ATP + H2O = ADP + phosphate + H(+). In terms of biological role, the RuvA-RuvB-RuvC complex processes Holliday junction (HJ) DNA during genetic recombination and DNA repair, while the RuvA-RuvB complex plays an important role in the rescue of blocked DNA replication forks via replication fork reversal (RFR). RuvA specifically binds to HJ cruciform DNA, conferring on it an open structure. The RuvB hexamer acts as an ATP-dependent pump, pulling dsDNA into and through the RuvAB complex. RuvB forms 2 homohexamers on either side of HJ DNA bound by 1 or 2 RuvA tetramers; 4 subunits per hexamer contact DNA at a time. Coordinated motions by a converter formed by DNA-disengaged RuvB subunits stimulates ATP hydrolysis and nucleotide exchange. Immobilization of the converter enables RuvB to convert the ATP-contained energy into a lever motion, pulling 2 nucleotides of DNA out of the RuvA tetramer per ATP hydrolyzed, thus driving DNA branch migration. The RuvB motors rotate together with the DNA substrate, which together with the progressing nucleotide cycle form the mechanistic basis for DNA recombination by continuous HJ branch migration. Branch migration allows RuvC to scan DNA until it finds its consensus sequence, where it cleaves and resolves cruciform DNA. The polypeptide is Holliday junction branch migration complex subunit RuvB (Photorhabdus laumondii subsp. laumondii (strain DSM 15139 / CIP 105565 / TT01) (Photorhabdus luminescens subsp. laumondii)).